Reading from the N-terminus, the 129-residue chain is Small ribosomal subunit protein uS11 (129 aa).

Belongs to the universal ribosomal protein uS11 family. As to quaternary structure, part of the 30S ribosomal subunit. Interacts with proteins S7 and S18. Binds to IF-3.

Located on the platform of the 30S subunit, it bridges several disparate RNA helices of the 16S rRNA. Forms part of the Shine-Dalgarno cleft in the 70S ribosome. This is Small ribosomal subunit protein uS11 from Bradyrhizobium diazoefficiens (strain JCM 10833 / BCRC 13528 / IAM 13628 / NBRC 14792 / USDA 110).